The chain runs to 494 residues: Tripartite motif-containing protein 5 (494 aa).

Alanine 2 carries the post-translational modification N-acetylalanine. Residues 15 to 59 (CPICLELLTQPLSLDCGHSFCQACLTANHKTSMPDEGERSCPVCR) form an RING-type zinc finger. At serine 86 the chain carries Phosphoserine. The segment at 91–133 (QKVDHCARHGEKLLLFCQEDRKVICWLCERSQEHRGHHTFLTE) adopts a B box-type zinc-finger fold. Zn(2+)-binding residues include cysteine 96, histidine 99, cysteine 118, and histidine 124. Positions 132-241 (TEEVAQEYQV…LISDLEHRLQ (110 aa)) form a coiled coil. A required for interaction with GABARAP and for autophagy region spans residues 186 to 199 (FEQLRHILDWVESN). One can recognise a B30.2/SPRY domain in the interval 282-494 (LKVMLEVLRE…VPMTLCSPSS (213 aa)).

This sequence belongs to the TRIM/RBCC family. In terms of assembly, can form homodimers and homotrimers. In addition to lower-order dimerization, also exhibits a higher-order multimerization and both low- and high-order multimerizations are essential for its restriction activity. Interacts with BTBD1 and BTBD2. Interacts with PSMC4, PSMC5, PSMD7 and HSPA8/HSC70. Interacts (via B30.2/SPRY domain) with HSPA1A/B. Interacts with PSMC2, MAP3K7/TAK1, TAB2 and TAB3. Interacts with SQSTM1. Interacts with TRIM6 and TRIM34. Interacts with ULK1 (phosphorylated form), GABARAP, GABARAPL1, GABARAPL2, MAP1LC3A, MAP1LC3C and BECN1. In terms of processing, degraded in a proteasome-independent fashion in the absence of viral infection but in a proteasome-dependent fashion following exposure to restriction sensitive virus. Post-translationally, autoubiquitinated in a RING finger- and UBE2D2-dependent manner. Monoubiquitinated by TRIM21. Deubiquitinated by Yersinia YopJ. Ubiquitination may not lead to proteasomal degradation.

It localises to the cytoplasm. Its subcellular location is the nucleus. It catalyses the reaction S-ubiquitinyl-[E2 ubiquitin-conjugating enzyme]-L-cysteine + [acceptor protein]-L-lysine = [E2 ubiquitin-conjugating enzyme]-L-cysteine + N(6)-ubiquitinyl-[acceptor protein]-L-lysine.. Its pathway is protein modification; protein ubiquitination. In terms of biological role, capsid-specific restriction factor that prevents infection from non-host-adapted retroviruses. Blocks viral replication early in the life cycle, after viral entry but before reverse transcription. In addition to acting as a capsid-specific restriction factor, also acts as a pattern recognition receptor that activates innate immune signaling in response to the retroviral capsid lattice. Binding to the viral capsid triggers its E3 ubiquitin ligase activity, and in concert with the heterodimeric ubiquitin conjugating enzyme complex UBE2V1-UBE2N (also known as UBC13-UEV1A complex) generates 'Lys-63'-linked polyubiquitin chains, which in turn are catalysts in the autophosphorylation of the MAP3K7/TAK1 complex (includes TAK1, TAB2, and TAB3). Activation of the MAP3K7/TAK1 complex by autophosphorylation results in the induction and expression of NF-kappa-B and MAPK-responsive inflammatory genes, thereby leading to an innate immune response in the infected cell. Plays a role in regulating autophagy through activation of autophagy regulator BECN1 by causing its dissociation from its inhibitors BCL2 and TAB2. The sequence is that of Tripartite motif-containing protein 5 (TRIM5) from Symphalangus syndactylus (Siamang).